A 310-amino-acid chain; its full sequence is Serine/threonine-protein phosphatase 4 catalytic subunit (310 aa).

Aspartate 53, histidine 55, aspartate 81, and asparagine 113 together coordinate Mn(2+). Histidine 114 acts as the Proton donor in catalysis. The Mn(2+) site is built by histidine 163 and histidine 237. Leucine methyl ester is present on leucine 310.

The protein belongs to the PPP phosphatase family. PP-4 (PP-X) subfamily. As to quaternary structure, catalytic subunit of the histone H2A phosphatase complex (HTP-C) containing PPH3, PSY2 and PSY4. Mn(2+) serves as cofactor.

It is found in the cytoplasm. It localises to the nucleus. It catalyses the reaction O-phospho-L-seryl-[protein] + H2O = L-seryl-[protein] + phosphate. The enzyme catalyses O-phospho-L-threonyl-[protein] + H2O = L-threonyl-[protein] + phosphate. Functionally, involved in the dephosphorylation and activation of the transcription factor GLN3 in response to nutrient availability. Forms the histone H2A phosphatase complex in association with the regulatory subunits PSY2 and PSY4, which dephosphorylates H2AS128ph (gamma-H2A) that has been displaced from sites of DNA lesions in the double-stranded DNA break repair process. Dephosphorylation is necessary for efficient recovery from the DNA damage checkpoint. This chain is Serine/threonine-protein phosphatase 4 catalytic subunit (PPH3), found in Eremothecium gossypii (strain ATCC 10895 / CBS 109.51 / FGSC 9923 / NRRL Y-1056) (Yeast).